The sequence spans 93 residues: MKFVLVLVSLALLVSLASVQGNNYCGRHLSETLAYMCPELEGASKRSGAMGAAAMYGTRGWRWAAMGGNRGKRGVVEECCYQSCTLDELLTYC.

Residues 1–21 (MKFVLVLVSLALLVSLASVQG) form the signal peptide. 3 disulfide bridges follow: cysteine 25–cysteine 80, cysteine 37–cysteine 93, and cysteine 79–cysteine 84. A propeptide spans 47 to 71 (SGAMGAAAMYGTRGWRWAAMGGNRG) (c peptide like).

It belongs to the insulin family. As to quaternary structure, heterodimer of a B chain and an A chain linked by two disulfide bonds. As to expression, located in 4 pairs of medial neurosecretory cells in the brain.

It is found in the secreted. The sequence is that of Bombyxin-related peptide B from Agrius convolvuli (Convolvulus hawk-moth).